The following is a 184-amino-acid chain: Orotate phosphoribosyltransferase (184 aa).

5-phospho-alpha-D-ribose 1-diphosphate is bound by residues Arg-99, Lys-100, Lys-103, His-105, and Glu-125–Ser-133. Residues Thr-129 and Arg-157 each coordinate orotate.

The protein belongs to the purine/pyrimidine phosphoribosyltransferase family. PyrE subfamily. As to quaternary structure, homodimer. Requires Mg(2+) as cofactor.

The catalysed reaction is orotidine 5'-phosphate + diphosphate = orotate + 5-phospho-alpha-D-ribose 1-diphosphate. Its pathway is pyrimidine metabolism; UMP biosynthesis via de novo pathway; UMP from orotate: step 1/2. Functionally, catalyzes the transfer of a ribosyl phosphate group from 5-phosphoribose 1-diphosphate to orotate, leading to the formation of orotidine monophosphate (OMP). This chain is Orotate phosphoribosyltransferase, found in Corynebacterium glutamicum (strain R).